A 906-amino-acid polypeptide reads, in one-letter code: Protein transport protein SEC24-2 (906 aa).

Zn(2+) contacts are provided by C222, C225, C244, and C247. Residues 222–247 are zinc finger-like; it reads CRRCRSYMNPFVTFIEQGRRWRCNFC.

Belongs to the SEC23/SEC24 family. SEC24 subfamily. The COPII coat is composed of at least 5 proteins: the SEC23/24 complex, the SEC13/31 complex, and the protein SAR1. Golgi apparatus membrane; Peripheral membrane protein; Cytoplasmic side.

It localises to the cytoplasm. It is found in the cytoplasmic vesicle. Its subcellular location is the COPII-coated vesicle membrane. The protein localises to the endoplasmic reticulum membrane. The protein resides in the golgi apparatus membrane. Component of the coat protein complex II (COPII) which promotes the formation of transport vesicles from the endoplasmic reticulum (ER). The coat has two main functions, the physical deformation of the endoplasmic reticulum membrane into vesicles and the selection of cargo molecules. The polypeptide is Protein transport protein SEC24-2 (SEC242) (Candida glabrata (strain ATCC 2001 / BCRC 20586 / JCM 3761 / NBRC 0622 / NRRL Y-65 / CBS 138) (Yeast)).